Consider the following 458-residue polypeptide: Monomethylamine methyltransferase MtmB1 (458 aa).

Pyl202 is a non-standard amino acid (pyrrolysine).

Belongs to the monomethylamine methyltransferase family.

The enzyme catalyses Co(I)-[methylamine-specific corrinoid protein] + methylamine + H(+) = methyl-Co(III)-[methylamine-specific corrinoid protein] + NH4(+). It participates in one-carbon metabolism; methanogenesis from methylamine. In terms of biological role, catalyzes the transfer of the methyl group from monomethylamine to the corrinoid cofactor of MtmC. The sequence is that of Monomethylamine methyltransferase MtmB1 (mtmB1) from Methanosarcina barkeri (strain Fusaro / DSM 804).